The chain runs to 105 residues: Small ribosomal subunit protein uS10 (105 aa).

This sequence belongs to the universal ribosomal protein uS10 family. As to quaternary structure, part of the 30S ribosomal subunit.

Involved in the binding of tRNA to the ribosomes. The polypeptide is Small ribosomal subunit protein uS10 (Oleidesulfovibrio alaskensis (strain ATCC BAA-1058 / DSM 17464 / G20) (Desulfovibrio alaskensis)).